The following is a 78-amino-acid chain: Conotoxin TsMEKL-P012 (78 aa).

Positions 1–19 (MEKLTILLLLAAVLVLAQA) are cleaved as a signal peptide. Residues 20–38 (LIKKGGGEKRQKEKINFLS) constitute a propeptide that is removed on maturation. Disulfide bonds link Cys52–Cys66, Cys59–Cys70, and Cys65–Cys75.

The protein belongs to the conotoxin O2 superfamily. Expressed by the venom duct.

The protein localises to the secreted. This Conus tessulatus (Tessellate cone) protein is Conotoxin TsMEKL-P012.